The primary structure comprises 161 residues: Allophycocyanin beta subunit (161 aa).

Asparagine 71 is subject to N4-methylasparagine. Residue cysteine 81 participates in (2R,3E)-phycocyanobilin binding.

Belongs to the phycobiliprotein family. As to quaternary structure, heterodimer of an alpha and a beta chain. Contains one covalently linked phycocyanobilin chromophore. The chromophore is added by the phycocyanobilin lyase CpcUS.

It is found in the cellular thylakoid membrane. Functionally, light-harvesting photosynthetic bile pigment-protein from the phycobiliprotein complex. Allophycocyanin has a maximum absorption at approximately 650 nanometers. This is Allophycocyanin beta subunit (apcB) from Picosynechococcus sp. (strain ATCC 27264 / PCC 7002 / PR-6) (Agmenellum quadruplicatum).